The chain runs to 267 residues: Tryptophan synthase alpha chain (267 aa).

Active-site proton acceptor residues include Glu49 and Asp60.

This sequence belongs to the TrpA family. As to quaternary structure, tetramer of two alpha and two beta chains.

The enzyme catalyses (1S,2R)-1-C-(indol-3-yl)glycerol 3-phosphate + L-serine = D-glyceraldehyde 3-phosphate + L-tryptophan + H2O. It participates in amino-acid biosynthesis; L-tryptophan biosynthesis; L-tryptophan from chorismate: step 5/5. Functionally, the alpha subunit is responsible for the aldol cleavage of indoleglycerol phosphate to indole and glyceraldehyde 3-phosphate. This is Tryptophan synthase alpha chain from Carboxydothermus hydrogenoformans (strain ATCC BAA-161 / DSM 6008 / Z-2901).